The primary structure comprises 287 residues: Cuticle collagen 38 (287 aa).

An N-terminal signal peptide occupies residues 1–19 (MSKYLVPVCASISLVAVFG). The segment at 95–287 (QGCPPGPPGP…CPCPARAKKH (193 aa)) is disordered. Positions 98–107 (PPGPPGPPGL) are enriched in pro residues. Collagen-like domains are found at residues 145 to 200 (QGPP…GSEG) and 215 to 273 (GQPG…SIGP). Over residues 184 to 205 (TGEQGPQGEPGTEGSEGPTGQD) the composition is skewed to low complexity. The segment covering 206–215 (GTIGGPGLPG) has biased composition (gly residues). Low complexity predominate over residues 238–252 (DGEQGPQGPQGPDGQ).

Belongs to the cuticular collagen family. In terms of assembly, collagen polypeptide chains are complexed within the cuticle by disulfide bonds and other types of covalent cross-links.

The protein resides in the nucleus. In terms of biological role, probable cuticular collagen-like protein. Nematode cuticles are composed largely of collagen-like proteins. The cuticle functions both as an exoskeleton and as a barrier to protect the worm from its environment. Acts downstream of the Wnt signaling pathway, perhaps in the formation of the adult cuticle. In Caenorhabditis elegans, this protein is Cuticle collagen 38.